Reading from the N-terminus, the 59-residue chain is Cytochrome c oxidase subunit 7 (59 aa).

Topologically, residues 1–24 are mitochondrial matrix; sequence MKNTIVQQQRFLQSIHKPTYLQRP. The chain crosses the membrane as a helical span at residues 25 to 47; the sequence is GSFALVYPYYAVMAGLGLYSLYA. At 48–59 the chain is on the mitochondrial intermembrane side; the sequence is SGRVIFGKKDAF.

This sequence belongs to the cytochrome c oxidase subunit 7 family. Component of the cytochrome c oxidase (complex IV, CIV), a multisubunit enzyme composed of a catalytic core of 3 subunits and several supernumerary subunits. The complex exists as a monomer or a dimer and forms supercomplexes (SCs) in the inner mitochondrial membrane with ubiquinol-cytochrome c oxidoreductase (cytochrome b-c1 complex, complex III, CIII).

It localises to the mitochondrion inner membrane. Its pathway is energy metabolism; oxidative phosphorylation. In terms of biological role, component of the cytochrome c oxidase, the last enzyme in the mitochondrial electron transport chain which drives oxidative phosphorylation. The respiratory chain contains 3 multisubunit complexes succinate dehydrogenase (complex II, CII), ubiquinol-cytochrome c oxidoreductase (cytochrome b-c1 complex, complex III, CIII) and cytochrome c oxidase (complex IV, CIV), that cooperate to transfer electrons derived from NADH and succinate to molecular oxygen, creating an electrochemical gradient over the inner membrane that drives transmembrane transport and the ATP synthase. Cytochrome c oxidase is the component of the respiratory chain that catalyzes the reduction of oxygen to water. Electrons originating from reduced cytochrome c in the intermembrane space (IMS) are transferred via the dinuclear copper A center (CU(A)) of subunit 2 and heme A of subunit 1 to the active site in subunit 1, a binuclear center (BNC) formed by heme A3 and copper B (CU(B)). The BNC reduces molecular oxygen to 2 water molecules using 4 electrons from cytochrome c in the IMS and 4 protons from the mitochondrial matrix. The polypeptide is Cytochrome c oxidase subunit 7 (cox7) (Schizosaccharomyces pombe (strain 972 / ATCC 24843) (Fission yeast)).